Consider the following 2393-residue polypeptide: Leucine-rich repeat serine/threonine-protein kinase 1 (2393 aa).

ANK repeat units lie at residues 56–86 (HGRT…SLNL), 90–120 (RGKT…PMKS), 123–152 (EGHC…KESE), 197–226 (EDET…HLLQ), 230–259 (SKDT…QLVK), 264–293 (EGST…PSEF), 317–347 (ECRT…SIDG), 361–390 (RGRT…DVNL), 407–437 (IGSG…DTDN), and 439–464 (ALRL…FADP). LRR repeat units follow at residues 532-553 (AITR…LFQM), 555-576 (SLRS…TYYI), 580-600 (SLEI…QFLS), 604-625 (QLQQ…IWLC), and 627-648 (ALKE…ARAS). Residues 649-675 (RGERPRLNNSNNNFNTQSPTQESNPIV) are disordered. LRR repeat units follow at residues 718–739 (TLTT…LACT), 742–763 (RLLI…ACVP), and 765–787 (HLRT…SPLH). A disordered region spans residues 797 to 844 (TSNGSMLPKRRNSPARQHRSRSKSAVRSQRSLSVSRHHALIDPQKEEE). Residues 804-820 (PKRRNSPARQHRSRSKS) are compositionally biased toward basic residues. Residues 821–830 (AVRSQRSLSV) are compositionally biased toward polar residues. Over residues 835 to 844 (ALIDPQKEEE) the composition is skewed to basic and acidic residues. 4 LRR repeats span residues 856–877 (WLKT…NAAS), 883–905 (ALNV…ARLT), 906–928 (LLSM…YGML), and 930–952 (RLWS…VNVE). Positions 969 to 1167 (ESKTYHHLRL…NTIYRTAWEV (199 aa)) constitute a Roc domain. GTP-binding positions include 982–989 (GSDGVGKS), 1040–1044 (DFGGQ), and 1098–1101 (TNLD). One can recognise a COR domain in the interval 1233–1422 (FYAACTFLHD…GFWSRLVTRI (190 aa)). Disordered stretches follow at residues 1361 to 1382 (CPSP…TDQN) and 1596 to 1633 (RNGS…RTTG). Polar residues-rich tracts occupy residues 1366-1382 (GSPT…TDQN) and 1620-1633 (ITSS…RTTG). In terms of domain architecture, Protein kinase spans 1694–1992 (LKRSRMLGRG…LVGFCAAPEF (299 aa)). ATP-binding positions include 1700–1708 (LGRGAFGFV) and K1726. D1847 functions as the Proton acceptor in the catalytic mechanism.

It belongs to the protein kinase superfamily. TKL Ser/Thr protein kinase family. ROCO subfamily. Mg(2+) serves as cofactor. The cofactor is Mn(2+). Expressed in cell bodies, but not in dendritic or axonal processes, of adult head neurons. Also present in non-neuronal tissues, such as the body wall musculature and the epithelial cells of the nematode vulva.

It localises to the golgi apparatus. It carries out the reaction L-seryl-[protein] + ATP = O-phospho-L-seryl-[protein] + ADP + H(+). The enzyme catalyses L-threonyl-[protein] + ATP = O-phospho-L-threonyl-[protein] + ADP + H(+). Functionally, determines polarized sorting of synaptic vesicle (SV) proteins to the axons by excluding SV proteins from the dendrite-specific transport machinery in the Golgi. Role in stress response. Appears to antagonize the effects of pink-1 both in the regulation of axon guidance and stress response. The chain is Leucine-rich repeat serine/threonine-protein kinase 1 (lrk-1) from Caenorhabditis elegans.